The chain runs to 392 residues: Telomere-binding protein subunit beta (392 aa).

The tract at residues 234-392 (QQVESVQVQP…ASKASKRSKK (159 aa)) is disordered. The span at 247–256 (GGAKGKKKAA) shows a compositional bias: basic residues. Positions 257 to 268 (TKSATKKTVAAK) are enriched in low complexity. The span at 269-284 (KTAESADVRKSVDKIV) shows a compositional bias: basic and acidic residues. Positions 328–343 (SPSGKKSTKTTDQMTM) are enriched in polar residues. Over residues 374–384 (GKASATSGKAS) the composition is skewed to low complexity.

In terms of assembly, heterodimer of an alpha and a beta subunit.

The protein localises to the nucleus. Its subcellular location is the chromosome. It localises to the telomere. Functionally, may function as protective capping of the single-stranded telomeric overhang. May also participate in telomere length regulation during DNA replication. This chain is Telomere-binding protein subunit beta (STY43), found in Stylonychia mytilus (Ciliate).